The following is a 288-amino-acid chain: Phosphopantetheinyl transferase (288 aa).

CoA contacts are provided by residues Arg-60, 99-104 (RTEMGK), and 118-121 (NLSH). Residues Asp-139 and Glu-196 each contribute to the Mg(2+) site. 196–200 (EAYLK) contributes to the CoA binding site.

It belongs to the P-Pant transferase superfamily. AcpS family. In terms of assembly, monomer.

It localises to the cytoplasm. The protein resides in the cytosol. The enzyme catalyses apo-[ACP] + CoA = holo-[ACP] + adenosine 3',5'-bisphosphate + H(+). It participates in lipid metabolism; fatty acid biosynthesis. Functionally, phosphopantetheinyl transferase that is essential for attaching phosphopantetheine to ACP domains of the polyunsaturated fatty acid (PUFA) synthase converting the inactive apo-synthase to the active holo-synthase. This chain is Phosphopantetheinyl transferase, found in Thraustochytrium sp. (strain ATCC 26185 / S-3).